We begin with the raw amino-acid sequence, 119 residues long: MSAIPLNRILPLGFLFHLLIFSFISLSSCMEFVEDPNNQGRISLQQRLGNQWAVGHLMGKKSLQDTDFEEMESFAKRNVENMRAALLQEQNRAESERELRHAQLVVRNILEQYLKNMQN.

The N-terminal stretch at 1-29 is a signal peptide; that stretch reads MSAIPLNRILPLGFLFHLLIFSFISLSSC. Residues 30 to 44 constitute a propeptide that is removed on maturation; the sequence is MEFVEDPNNQGRISL. The residue at position 58 (methionine 58) is a Methionine amide. Residues 62–119 constitute a propeptide that is removed on maturation; the sequence is SLQDTDFEEMESFAKRNVENMRAALLQEQNRAESERELRHAQLVVRNILEQYLKNMQN.

The protein belongs to the bombesin/neuromedin-B/ranatensin family. In terms of tissue distribution, localized to the cutaneous granular glands in the skin and the brain.

It is found in the secreted. Its function is as follows. Stimulates smooth muscle contraction. Role in induction of hypothermia, stimulation of DNA replication and release of many gastrointestinal hormones. This Bombina orientalis (Oriental fire-bellied toad) protein is Bombesin.